Reading from the N-terminus, the 101-residue chain is Nucleoid-associated protein Cla_0113 (101 aa).

The protein belongs to the YbaB/EbfC family. As to quaternary structure, homodimer.

The protein resides in the cytoplasm. The protein localises to the nucleoid. Functionally, binds to DNA and alters its conformation. May be involved in regulation of gene expression, nucleoid organization and DNA protection. This Campylobacter lari (strain RM2100 / D67 / ATCC BAA-1060) protein is Nucleoid-associated protein Cla_0113.